Here is a 115-residue protein sequence, read N- to C-terminus: Ribonuclease P protein component (115 aa).

It belongs to the RnpA family. As to quaternary structure, consists of a catalytic RNA component (M1 or rnpB) and a protein subunit.

The catalysed reaction is Endonucleolytic cleavage of RNA, removing 5'-extranucleotides from tRNA precursor.. Functionally, RNaseP catalyzes the removal of the 5'-leader sequence from pre-tRNA to produce the mature 5'-terminus. It can also cleave other RNA substrates such as 4.5S RNA. The protein component plays an auxiliary but essential role in vivo by binding to the 5'-leader sequence and broadening the substrate specificity of the ribozyme. The polypeptide is Ribonuclease P protein component (Bacillus cereus (strain Q1)).